The following is a 137-amino-acid chain: Large ribosomal subunit protein uL16 (137 aa).

Residues 1 to 20 (MLQPSNRKYRKDFKGRNRGV) are disordered. Basic residues predominate over residues 7 to 17 (RKYRKDFKGRN).

Belongs to the universal ribosomal protein uL16 family. As to quaternary structure, part of the 50S ribosomal subunit.

Binds 23S rRNA and is also seen to make contacts with the A and possibly P site tRNAs. In Coxiella burnetii (strain CbuG_Q212) (Coxiella burnetii (strain Q212)), this protein is Large ribosomal subunit protein uL16.